A 437-amino-acid chain; its full sequence is Probable N-acetylmuramidase (437 aa).

The first 57 residues, 1–57 (MPVSRVKVKNRHLKKKTKKPLAFYKPATKFAGAVLIAGTLTTTHELLLQQTSPMVQA), serve as a signal peptide directing secretion. 3 disordered regions span residues 217–244 (SSAG…SSTT), 290–320 (ASST…SQTT), and 367–392 (AASN…NSNA). One can recognise a LysM 1 domain in the interval 243-286 (TTYTVKSGDTLWGISQRYGISVAQIQSANNLKSTIIYIGQKLVL). Positions 290 to 317 (ASSTNSGGSNNSASTTPTTSVTPAKPTS) are enriched in low complexity. In terms of domain architecture, LysM 2 spans 319 to 362 (TTVKVKSGDTLWALSVKYKTSIAQLKSWNHLSSDTIYIGQNLIV). The LysM 3 domain occupies 393–436 (SIHKVVKGDTLWGLSQKSGSPIASIKAWNHLSSDTILIGQYLRI).

This sequence belongs to the glycosyl hydrolase 73 family.

The protein resides in the secreted. The catalysed reaction is Hydrolysis of (1-&gt;4)-beta-linkages between N-acetylmuramic acid and N-acetyl-D-glucosamine residues in a peptidoglycan and between N-acetyl-D-glucosamine residues in chitodextrins.. Hydrolyzes the cell wall of L.lactis and M.lysodeikticus. Required for cell separation during growth. The sequence is that of Probable N-acetylmuramidase (acmA) from Lactococcus lactis subsp. cremoris (strain MG1363).